A 323-amino-acid polypeptide reads, in one-letter code: Macrolide efflux protein A (323 aa).

Transmembrane regions (helical) follow at residues Val6–Val26, Leu51–Ile71, Ser105–Trp125, Asn128–Val148, Phe182–Phe202, Ile219–Gly239, Ile245–Leu265, Phe270–Val290, and Tyr303–Leu323.

This sequence belongs to the major facilitator superfamily. Drug:H(+) antiporter-3 (DHA3) (TC 2.A.1.21) family.

The protein localises to the cell membrane. In terms of biological role, confers resistance to 14-membered macrolides including erythromycin and to 15-membered macrolides but not to 16-membered macrolides, lincosamides or analogs of streptogramin B. May function as an efflux pump to regulate intracellular macrolide levels. In Enterococcus faecalis (Streptococcus faecalis), this protein is Macrolide efflux protein A (mefA).